Here is a 196-residue protein sequence, read N- to C-terminus: FMN-dependent NADH:quinone oxidoreductase (196 aa).

Ser10 provides a ligand contact to FMN.

It belongs to the azoreductase type 1 family. In terms of assembly, homodimer. Requires FMN as cofactor.

The catalysed reaction is 2 a quinone + NADH + H(+) = 2 a 1,4-benzosemiquinone + NAD(+). It catalyses the reaction N,N-dimethyl-1,4-phenylenediamine + anthranilate + 2 NAD(+) = 2-(4-dimethylaminophenyl)diazenylbenzoate + 2 NADH + 2 H(+). In terms of biological role, quinone reductase that provides resistance to thiol-specific stress caused by electrophilic quinones. Functionally, also exhibits azoreductase activity. Catalyzes the reductive cleavage of the azo bond in aromatic azo compounds to the corresponding amines. The protein is FMN-dependent NADH:quinone oxidoreductase of Cereibacter sphaeroides (strain ATCC 17029 / ATH 2.4.9) (Rhodobacter sphaeroides).